Consider the following 759-residue polypeptide: Polyribonucleotide nucleotidyltransferase (759 aa).

Mg(2+)-binding residues include Asp-522 and Asp-528. A KH domain is found at 588–647; sequence PRITTIKVPVDKIGEVIGPKGKMINSITEETGASISIEDDGTVFVGASNGEAAQAAIDKI. One can recognise an S1 motif domain in the interval 659 to 728; that stretch reads GERFLGTVVK…NRGKISLVLV (70 aa). Positions 734 to 759 are disordered; sequence AEASDNGSATPSDKAPATADATTAGN. Positions 741–759 are enriched in low complexity; that stretch reads SATPSDKAPATADATTAGN.

It belongs to the polyribonucleotide nucleotidyltransferase family. It depends on Mg(2+) as a cofactor.

It localises to the cytoplasm. It catalyses the reaction RNA(n+1) + phosphate = RNA(n) + a ribonucleoside 5'-diphosphate. In terms of biological role, involved in mRNA degradation. Catalyzes the phosphorolysis of single-stranded polyribonucleotides processively in the 3'- to 5'-direction. In Mycobacterium sp. (strain JLS), this protein is Polyribonucleotide nucleotidyltransferase.